A 95-amino-acid chain; its full sequence is uncharacterized protein (95 aa).

The interval 1–73 (MAHFKDDLQT…AQQPSMRTEL (73 aa)) is disordered. 2 stretches are compositionally biased toward polar residues: residues 42 to 52 (SNHSPSVQESP) and 62 to 73 (GSAQQPSMRTEL).

This is an uncharacterized protein from Homo sapiens (Human).